The primary structure comprises 348 residues: Dihydroorotase (348 aa).

Zn(2+)-binding residues include H13 and H15. Substrate contacts are provided by residues 15 to 17 (HLR) and N41. K99, H136, and H174 together coordinate Zn(2+). Position 99 is an N6-carboxylysine (K99). H136 is a binding site for substrate. L219 is a binding site for substrate. D247 contacts Zn(2+). The active site involves D247. The substrate site is built by H251 and A263.

This sequence belongs to the metallo-dependent hydrolases superfamily. DHOase family. Class II DHOase subfamily. Homodimer. Requires Zn(2+) as cofactor.

It carries out the reaction (S)-dihydroorotate + H2O = N-carbamoyl-L-aspartate + H(+). It participates in pyrimidine metabolism; UMP biosynthesis via de novo pathway; (S)-dihydroorotate from bicarbonate: step 3/3. Its function is as follows. Catalyzes the reversible cyclization of carbamoyl aspartate to dihydroorotate. The sequence is that of Dihydroorotase from Rhizobium johnstonii (strain DSM 114642 / LMG 32736 / 3841) (Rhizobium leguminosarum bv. viciae).